Reading from the N-terminus, the 98-residue chain is Endoribonuclease antitoxin GhoS (98 aa).

Monomer. Post-translationally, unlike other TA antitoxins, this protein is stable.

Its function is as follows. Antitoxin component of a type V toxin-antitoxin (TA) system. Neutralizes the toxic effects of toxin GhoT by digesting ghoT transcripts in a sequence-specific manner. In concert with GhoT is involved in reducing cell growth during antibacterial stress. The chain is Endoribonuclease antitoxin GhoS from Escherichia coli O157:H7.